The chain runs to 621 residues: Chaperone protein HscA homolog (621 aa).

Belongs to the heat shock protein 70 family.

Its function is as follows. Chaperone involved in the maturation of iron-sulfur cluster-containing proteins. Has a low intrinsic ATPase activity which is markedly stimulated by HscB. The polypeptide is Chaperone protein HscA homolog (Azotobacter vinelandii (strain DJ / ATCC BAA-1303)).